Here is a 195-residue protein sequence, read N- to C-terminus: Probable GTP-binding protein EngB (195 aa).

Positions 22–194 (LKGEVAFVGR…LDLISTLLKE (173 aa)) constitute an EngB-type G domain. GTP-binding positions include 30–37 (GRSNVGKS), 56–60 (GKTRS), 74–77 (DLPG), 141–144 (TKMD), and 173–175 (TSS). Serine 37 and threonine 58 together coordinate Mg(2+).

The protein belongs to the TRAFAC class TrmE-Era-EngA-EngB-Septin-like GTPase superfamily. EngB GTPase family. Requires Mg(2+) as cofactor.

Functionally, necessary for normal cell division and for the maintenance of normal septation. This is Probable GTP-binding protein EngB from Thermotoga maritima (strain ATCC 43589 / DSM 3109 / JCM 10099 / NBRC 100826 / MSB8).